The following is a 71-amino-acid chain: Phosphatidylinositol N-acetylglucosaminyltransferase subunit Y (71 aa).

The Cytoplasmic segment spans residues 1-3 (MFL). A helical transmembrane segment spans residues 4–26 (SLPMLTVLIPLVSLAGLFYSASV). Residues 27 to 44 (EDDFPQGCTSTTSLCFYS) lie on the Lumenal side of the membrane. Residues 45 to 65 (LLLPITIPVYVFFHLWTWMGI) traverse the membrane as a helical segment. Topologically, residues 66–71 (KLFRHN) are cytoplasmic.

As to quaternary structure, component of the glycosylphosphatidylinositol-N-acetylglucosaminyltransferase (GPI-GnT) complex composed at least by PIGA, PIGC, PIGH, PIGP, PIGQ, PIGY and DPM2. Interacts directly with PIGA; this interaction regulates glycosylphosphatidylinositol-N-acetylglucosaminyltransferase activity. Does not interact with Ras proteins.

It is found in the endoplasmic reticulum membrane. It participates in glycolipid biosynthesis; glycosylphosphatidylinositol-anchor biosynthesis. Its function is as follows. Part of the glycosylphosphatidylinositol-N-acetylglucosaminyltransferase (GPI-GnT) complex that catalyzes the transfer of N-acetylglucosamine from UDP-N-acetylglucosamine to phosphatidylinositol and participates in the first step of GPI biosynthesis. May act by regulating the catalytic subunit PIGA. This is Phosphatidylinositol N-acetylglucosaminyltransferase subunit Y from Bos taurus (Bovine).